The following is a 156-amino-acid chain: Glycine cleavage system H protein 2, mitochondrial (156 aa).

The transit peptide at 1–23 (MACRLFWASRVASHLRISVAQRG) directs the protein to the mitochondrion. Residues 47 to 129 (KATFGITDHA…YEQGWIIKVE (83 aa)) form the Lipoyl-binding domain. Lys-88 carries the N6-lipoyllysine modification. Residue Ser-131 is modified to Phosphoserine.

This sequence belongs to the GcvH family. As to quaternary structure, the glycine cleavage system is composed of four proteins: P, T, L and H. It depends on (R)-lipoate as a cofactor.

It localises to the mitochondrion. Functionally, the glycine decarboxylase (GDC) or glycine cleavage system catalyzes the degradation of glycine. The H protein shuttles the methylamine group of glycine from the P protein to the T protein. The chain is Glycine cleavage system H protein 2, mitochondrial (GDH2) from Arabidopsis thaliana (Mouse-ear cress).